The sequence spans 409 residues: MSVGTVYGKIGSPRVLFCVSVAAVAGVEVEHVDVQPHNFPADLAAKFPLQKMPVFVGKDGFPLSETLAIAFYLASLNKTRALNGTTAEEKAKVLQYCSFTNSELPGAFRPIIAPRVFGAPYDEQAAKEAETAIALIFARFDEELASKTYLVGSRLTLADIFFTCFLKFGATYVLTKSYLAKYTHIYRYYQTIYHQAKLDAITEPLKFIDQPLPIIKAENKEAAPAKKAEKKKDEKKKNAPKPQAERPAKPPKHPLASAPNGSFDIEEYKRVYSNQDTRSGALPWFFEHFDPENYSVWKVDYSYPEDLKQPVFMTNNLIGGFFQRLEASRKYIFGCCVVIGENGDNTITGAFVIKGHDYVPAFDVAPDWGSYTFTKLDINKPEDKAFIEDAWAWDKPIEGREVADGKVCK.

Residues 2 to 81 form the GST N-terminal domain; sequence SVGTVYGKIG…YLASLNKTRA (80 aa). Residues 86 to 212 enclose the GST C-terminal domain; that stretch reads TAEEKAKVLQ…EPLKFIDQPL (127 aa). Over residues 219–248 the composition is skewed to basic and acidic residues; it reads NKEAAPAKKAEKKKDEKKKNAPKPQAERPA. The disordered stretch occupies residues 219–261; it reads NKEAAPAKKAEKKKDEKKKNAPKPQAERPAKPPKHPLASAPNG. The region spanning 251–409 is the EF-1-gamma C-terminal domain; the sequence is PKHPLASAPN…REVADGKVCK (159 aa).

As to quaternary structure, EF-1 is composed of four subunits: alpha, beta, delta, and gamma.

Functionally, probably plays a role in anchoring the complex to other cellular components. The polypeptide is Elongation factor 1-gamma (tef3) (Schizosaccharomyces pombe (strain 972 / ATCC 24843) (Fission yeast)).